A 189-amino-acid polypeptide reads, in one-letter code: Vacuolar iron transporter homolog 2 (189 aa).

Topologically, residues 1–10 (MARAQWLRAA) are cytoplasmic. Residues 11–31 (VLGANDGLVSVASLMIGIGAV) form a helical membrane-spanning segment. Residues 32 to 38 (NENNKAM) lie on the Vacuolar side of the membrane. The chain crosses the membrane as a helical span at residues 39 to 59 (LVSGLAGLVAGACSMAIGEFV). Residues 60-97 (SVYAQYDIEVTQIERDGDIDGADAAAAREKLPSPTQAA) are Cytoplasmic-facing. A helical membrane pass occupies residues 98–118 (FASALAFAIGGLLPLLTSGFI). Residues 119-124 (KPWGPR) are Vacuolar-facing. Residues 125–145 (VGVVCAASSVGLAGFGAAGGY) traverse the membrane as a helical segment. Residues 146-159 (LGGANMVRSGTRVL) are Cytoplasmic-facing. The chain crosses the membrane as a helical span at residues 160-180 (LGGWLAMLITYAVLRLFATIF). The Vacuolar portion of the chain corresponds to 181-189 (HGMNISSSA).

Belongs to the CCC1 family.

It localises to the vacuole membrane. It catalyses the reaction Fe(2+)(in) = Fe(2+)(out). Functionally, probable vacuolar iron transporter that may be involved in the regulation of iron distribution throughout the plant. This is Vacuolar iron transporter homolog 2 from Oryza sativa subsp. japonica (Rice).